Reading from the N-terminus, the 442-residue chain is Tubby-related protein 3 (442 aa).

A required for association with the IFT complex A (IFT-A) region spans residues 23 to 68 (MRQAKLDYQRLLLEKRQRKKRLEPFMVQPNPEARLRRAKPRASDEQ). Residues 101–177 (PSVSSSVVEE…TSGSATAAQP (77 aa)) form a disordered region. Residues 145–162 (GISQSACLERPNSASSQN) are compositionally biased toward polar residues. Low complexity predominate over residues 163–175 (STDTGTSGSATAA).

The protein belongs to the TUB family. As to quaternary structure, associates with the IFT complex A (IFT-A). Interacts with SIRT1. As to expression, expressed at high levels in testis, ovaries, thyroid, and spinal cord.

It localises to the nucleus. The protein resides in the cell membrane. The protein localises to the cell projection. It is found in the cilium. Its subcellular location is the cytoplasm. It localises to the secreted. Negative regulator of the Shh signaling transduction pathway: recruited to primary cilia via association with the IFT complex A (IFT-A) and is required for recruitment of G protein-coupled receptor GPR161 to cilia, a promoter of PKA-dependent basal repression machinery in Shh signaling. Binds to phosphorylated inositide (phosphoinositide) lipids. Both IFT-A- and phosphoinositide-binding properties are required to regulate ciliary G protein-coupled receptor trafficking. During adipogenesis, regulates ciliary trafficking of FFAR4 in preadipocytes. The protein is Tubby-related protein 3 of Homo sapiens (Human).